Reading from the N-terminus, the 213-residue chain is Protein GET1 (213 aa).

Topologically, residues 1–4 (MPSL) are lumenal. A helical transmembrane segment spans residues 5 to 24 (LLVVFILQFLLHIINTVGAS). Over 25 to 110 (TVNDLLWILY…AFTSAVSTLR (86 aa)) the chain is Cytoplasmic. A coiled-coil region spans residues 41-68 (TSSSAQKAQKLKKEIVQLKRELGATSAQ). The helical transmembrane segment at 111 to 131 (WLGTQGLRFVLQFWFAKSPMF) threads the bilayer. Topologically, residues 132–155 (WMPAGWLPFYVEWILSFPRAPLGS) are lumenal. Residues 156 to 172 (VSINVWGIACASMIALA) form a helical membrane-spanning segment. Over 173–213 (AEGLAAVWVLATKRPTPIATEKKEAMAFAADQKSSGEKKEL) the chain is Cytoplasmic.

Belongs to the WRB/GET1 family. As to quaternary structure, interacts with GET3.

Its subcellular location is the endoplasmic reticulum membrane. Its function is as follows. Required for the post-translational delivery of tail-anchored (TA) proteins to the endoplasmic reticulum. Acts as a membrane receptor for soluble GET3, which recognizes and selectively binds the transmembrane domain of TA proteins in the cytosol. This Phaeosphaeria nodorum (strain SN15 / ATCC MYA-4574 / FGSC 10173) (Glume blotch fungus) protein is Protein GET1.